Here is a 343-residue protein sequence, read N- to C-terminus: MEVNHWIAMADCFFVTGGTGFVGANLVRHLLEQGYQVRALVRASSRPDNLQNLPIDWVVGDLNDGDLHQQMQGCQGLFHVAAHYSLWQKDREALYRSNVLGTRNILACAQKAGIERTVYTSSVAAIGVKGDGQRADESYQSPVEKLIGAYKQSKYWAEQEALTAAQQGQDIVIVNPSTPIGPWDIKPTPTGEIILRFLRRQMPAYVNTGLNLIDVRDVAAGHLLAWQRGKTALTRGDRYILGHENISLQGILAHLSTITGLPAPKNTVPLWLPLTFAWVEEKVLAPLGRSPSVPMDGVKMSAQEMYYDASKAVQELGLPQSSIKQALADAVHWFQNHGYVKTQ.

Y150 lines the NADP(+) pocket.

Belongs to the NAD(P)-dependent epimerase/dehydratase family. Dihydroflavonol-4-reductase subfamily.

The catalysed reaction is a (2R,3S,4S)-leucoanthocyanidin + NADP(+) = a (2R,3R)-dihydroflavonol + NADPH + H(+). Its pathway is secondary metabolite biosynthesis; flavonoid biosynthesis. This chain is Putative dihydroflavonol 4-reductase (dfrA), found in Synechocystis sp. (strain ATCC 27184 / PCC 6803 / Kazusa).